Here is a 1624-residue protein sequence, read N- to C-terminus: ATP-binding cassette sub-family A member 6 (1624 aa).

A helical transmembrane segment spans residues 31–51 (LLEWSIPIIIGLHMGLFSYLA). Residues asparagine 84 and asparagine 91 are each glycosylated (N-linked (GlcNAc...) asparagine). 6 consecutive transmembrane segments (helical) span residues 222-242 (IFIL…SSNV), 267-287 (WGLI…IIIT), 297-317 (FLVI…VTFL), 326-346 (VLTN…GFTV), 356-376 (EWVL…KVIF), and 395-415 (VMIA…VLAL). The region spanning 478–713 (IRIRNIKKEY…WGLGYHLSLF (236 aa)) is the ABC transporter 1 domain. Residue 514 to 521 (GHSGAGKS) participates in ATP binding. The N-linked (GlcNAc...) asparagine glycan is linked to asparagine 576. 8 helical membrane passes run 854–874 (AFLI…IEYV), 971–991 (LHCF…MLNH), 1005–1025 (FIVL…CVIC), 1058–1078 (WCGQ…TSYF), 1094–1114 (IVFS…FLTY), 1130–1150 (WSIC…NGPF), 1154–1174 (LVIS…LVVL), and 1194–1214 (AVDL…IFVL). Residues 1282 to 1520 (LHKEYAGQKK…FGQDYVLELR (239 aa)) enclose the ABC transporter 2 domain. 1320 to 1327 (GPDGAGKS) lines the ATP pocket.

The protein belongs to the ABC transporter superfamily. ABCA family. Widely expressed with higher expression in heart, lung, brain, spleen and testis.

The protein localises to the golgi apparatus membrane. In terms of biological role, probable transporter which may play a role in macrophage lipid transport and homeostasis. The protein is ATP-binding cassette sub-family A member 6 (Abca6) of Mus musculus (Mouse).